The primary structure comprises 201 residues: Heat shock protein beta-1 (201 aa).

The residue at position 15 (serine 15) is a Phosphoserine; by PKA and PKC. The region spanning 83 to 193 (ALSRQMSSGM…SETTIPVNVE (111 aa)) is the sHSP domain.

It belongs to the small heat shock protein (HSP20) family. Homooligomer. Homodimer; becomes monomeric upon activation. Heterooligomer.

The protein localises to the cytoplasm. Its subcellular location is the nucleus. It is found in the cytoskeleton. It localises to the spindle. Functionally, small heat shock protein which functions as a molecular chaperone probably maintaining denatured proteins in a folding-competent state. Plays a role in stress resistance and actin organization. The chain is Heat shock protein beta-1 (hspb1) from Poeciliopsis lucida (Desert topminnow).